The chain runs to 436 residues: Homeobox protein PKNOX1 (436 aa).

Residues 23-50 (ELKTEQDPNCSDPDAEGVSPPPIESQTP) form a disordered region. S33 and S41 each carry phosphoserine. Residues 80–163 (GSEGTTSASF…MNSETLLSGE (84 aa)) form the MEIS N-terminal domain. The segment at residues 259 to 321 (SKNKRGVLPK…NARRRILQPM (63 aa)) is a DNA-binding region (homeobox; TALE-type). A disordered region spans residues 401–436 (AGQSEDESVDSTEDEGGALAPTHISGLVLENSDSLQ). Over residues 404-416 (SEDESVDSTEDEG) the composition is skewed to acidic residues.

This sequence belongs to the TALE/MEIS homeobox family. In terms of assembly, interacts with MN1.

It is found in the nucleus. Functionally, activates transcription in the presence of PBX1A and HOXA1. (Microbial infection) In complex with PBX1, binds to the 5'-TGATTGAC-3' consensus sequence in the U5 region of Moloney murine leukemia virus and promotes viral transcription. This is Homeobox protein PKNOX1 from Mus musculus (Mouse).